The primary structure comprises 207 residues: Large ribosomal subunit protein bL25 (207 aa).

A disordered region spans residues 185–207; that stretch reads DLEEETGEAAAEAEAPAEEGAES.

It belongs to the bacterial ribosomal protein bL25 family. CTC subfamily. In terms of assembly, part of the 50S ribosomal subunit; part of the 5S rRNA/L5/L18/L25 subcomplex. Contacts the 5S rRNA. Binds to the 5S rRNA independently of L5 and L18.

Functionally, this is one of the proteins that binds to the 5S RNA in the ribosome where it forms part of the central protuberance. The polypeptide is Large ribosomal subunit protein bL25 (Rhodococcus jostii (strain RHA1)).